Reading from the N-terminus, the 473-residue chain is UDP-N-acetylmuramate--L-alanine ligase (473 aa).

ATP is bound at residue 112–118 (GTHGKTT).

The protein belongs to the MurCDEF family.

Its subcellular location is the cytoplasm. It catalyses the reaction UDP-N-acetyl-alpha-D-muramate + L-alanine + ATP = UDP-N-acetyl-alpha-D-muramoyl-L-alanine + ADP + phosphate + H(+). Its pathway is cell wall biogenesis; peptidoglycan biosynthesis. Functionally, cell wall formation. The polypeptide is UDP-N-acetylmuramate--L-alanine ligase (Nitrosomonas eutropha (strain DSM 101675 / C91 / Nm57)).